We begin with the raw amino-acid sequence, 336 residues long: Glyceraldehyde-3-phosphate dehydrogenase (336 aa).

Residues 12 to 13 (RI), aspartate 34, and arginine 79 contribute to the NAD(+) site. Residues 150-152 (SCT), threonine 181, 210-211 (TG), and arginine 233 contribute to the D-glyceraldehyde 3-phosphate site. Catalysis depends on cysteine 151, which acts as the Nucleophile. An NAD(+)-binding site is contributed by asparagine 315.

This sequence belongs to the glyceraldehyde-3-phosphate dehydrogenase family. In terms of assembly, homotetramer.

It is found in the cytoplasm. The catalysed reaction is D-glyceraldehyde 3-phosphate + phosphate + NAD(+) = (2R)-3-phospho-glyceroyl phosphate + NADH + H(+). Its pathway is carbohydrate degradation; glycolysis; pyruvate from D-glyceraldehyde 3-phosphate: step 1/5. Its function is as follows. Involved in osmoadaptation. This chain is Glyceraldehyde-3-phosphate dehydrogenase (gpdA), found in Emericella nidulans (strain FGSC A4 / ATCC 38163 / CBS 112.46 / NRRL 194 / M139) (Aspergillus nidulans).